The chain runs to 98 residues: NADH-ubiquinone oxidoreductase chain 4L (98 aa).

A run of 3 helical transmembrane segments spans residues 1–21 (MSLV…GLLM), 29–49 (SLLC…IMIL), and 61–81 (IILL…LVMV).

This sequence belongs to the complex I subunit 4L family. As to quaternary structure, core subunit of respiratory chain NADH dehydrogenase (Complex I) which is composed of 45 different subunits.

It localises to the mitochondrion inner membrane. It catalyses the reaction a ubiquinone + NADH + 5 H(+)(in) = a ubiquinol + NAD(+) + 4 H(+)(out). Functionally, core subunit of the mitochondrial membrane respiratory chain NADH dehydrogenase (Complex I) which catalyzes electron transfer from NADH through the respiratory chain, using ubiquinone as an electron acceptor. Part of the enzyme membrane arm which is embedded in the lipid bilayer and involved in proton translocation. This is NADH-ubiquinone oxidoreductase chain 4L (MT-ND4L) from Urotrichus talpoides (Japanese shrew mole).